The following is a 131-amino-acid chain: Small ribosomal subunit protein uS11 (131 aa).

This sequence belongs to the universal ribosomal protein uS11 family. Part of the 30S ribosomal subunit. Interacts with proteins S7 and S18. Binds to IF-3.

Located on the platform of the 30S subunit, it bridges several disparate RNA helices of the 16S rRNA. Forms part of the Shine-Dalgarno cleft in the 70S ribosome. The sequence is that of Small ribosomal subunit protein uS11 from Bacillus pumilus (strain SAFR-032).